Consider the following 477-residue polypeptide: Serine/threonine-protein kinase pakC (477 aa).

One can recognise a PH domain in the interval 13 to 108 (SPDKEGELKK…WMKAVEKGSE (96 aa)). The region spanning 112-125 (VSQPFNLKHEVHVD) is the CRIB domain. The Protein kinase domain occupies 204–458 (YKNMTKIGEG…ATDLLKHPFM (255 aa)). ATP contacts are provided by residues 210–218 (IGEGAAGEV) and K233. Residue D326 is the Proton acceptor of the active site.

It belongs to the protein kinase superfamily. STE Ser/Thr protein kinase family. STE20 subfamily. In terms of assembly, interacts with GTP-bound racB. Mg(2+) serves as cofactor.

Its subcellular location is the cytoplasm. The protein localises to the membrane. It catalyses the reaction L-seryl-[protein] + ATP = O-phospho-L-seryl-[protein] + ADP + H(+). It carries out the reaction L-threonyl-[protein] + ATP = O-phospho-L-threonyl-[protein] + ADP + H(+). With respect to regulation, kinase activity is rapidly and transiently increased in response to chemoattractant stimulation. In terms of biological role, has role in the regulation of chemotaxis. This is Serine/threonine-protein kinase pakC (pakC) from Dictyostelium discoideum (Social amoeba).